The chain runs to 237 residues: Cytidylate kinase (237 aa).

ATP is bound at residue 15 to 23 (GPSGSGKGT).

The protein belongs to the cytidylate kinase family. Type 1 subfamily.

It localises to the cytoplasm. It catalyses the reaction CMP + ATP = CDP + ADP. The catalysed reaction is dCMP + ATP = dCDP + ADP. The polypeptide is Cytidylate kinase (Coxiella burnetii (strain RSA 493 / Nine Mile phase I)).